The chain runs to 162 residues: MKLSDIADNAGSRKKRMRVGRGIGSGKGKTAGRGGKGQTARSGVRIKGFEGGQMPLHRRLPKRGFNNIFRLDFAEINLDRLQEAVDAKTIDGSGVINAETLVASGVLRRAKDGVRLLGRGELKAKLTIEVHGATKTAIEAVEKAGGTVKILAPAKKDEGEAA.

The disordered stretch occupies residues 1–41 (MKLSDIADNAGSRKKRMRVGRGIGSGKGKTAGRGGKGQTAR). Residues 21-37 (RGIGSGKGKTAGRGGKG) show a composition bias toward gly residues.

Belongs to the universal ribosomal protein uL15 family. In terms of assembly, part of the 50S ribosomal subunit.

Its function is as follows. Binds to the 23S rRNA. In Rhodopseudomonas palustris (strain BisB18), this protein is Large ribosomal subunit protein uL15.